Here is a 209-residue protein sequence, read N- to C-terminus: Uridine kinase (209 aa).

12–19 (GGSGGGKT) contributes to the ATP binding site.

The protein belongs to the uridine kinase family.

It localises to the cytoplasm. The enzyme catalyses uridine + ATP = UMP + ADP + H(+). It carries out the reaction cytidine + ATP = CMP + ADP + H(+). Its pathway is pyrimidine metabolism; CTP biosynthesis via salvage pathway; CTP from cytidine: step 1/3. It participates in pyrimidine metabolism; UMP biosynthesis via salvage pathway; UMP from uridine: step 1/1. This is Uridine kinase from Streptococcus agalactiae serotype V (strain ATCC BAA-611 / 2603 V/R).